The sequence spans 369 residues: Probable L-tyrosine/L-aspartate decarboxylase (369 aa).

The residue at position 224 (Lys-224) is an N6-(pyridoxal phosphate)lysine.

It belongs to the group II decarboxylase family. MfnA subfamily. Requires pyridoxal 5'-phosphate as cofactor.

It catalyses the reaction L-tyrosine + H(+) = tyramine + CO2. It carries out the reaction L-aspartate + H(+) = beta-alanine + CO2. The protein operates within cofactor biosynthesis; methanofuran biosynthesis. Its pathway is cofactor biosynthesis; coenzyme A biosynthesis. Functionally, catalyzes the decarboxylation of L-tyrosine to produce tyramine for methanofuran biosynthesis. Can also catalyze the decarboxylation of L-aspartate to produce beta-alanine for coenzyme A (CoA) biosynthesis. The protein is Probable L-tyrosine/L-aspartate decarboxylase of Methanospirillum hungatei JF-1 (strain ATCC 27890 / DSM 864 / NBRC 100397 / JF-1).